Here is a 94-residue protein sequence, read N- to C-terminus: Integration host factor subunit beta (94 aa).

The protein belongs to the bacterial histone-like protein family. As to quaternary structure, heterodimer of an alpha and a beta chain.

This protein is one of the two subunits of integration host factor, a specific DNA-binding protein that functions in genetic recombination as well as in transcriptional and translational control. This chain is Integration host factor subunit beta, found in Xanthobacter autotrophicus (strain ATCC BAA-1158 / Py2).